A 200-amino-acid polypeptide reads, in one-letter code: dTTP/UTP pyrophosphatase (200 aa).

Asp80 functions as the Proton acceptor in the catalytic mechanism.

This sequence belongs to the Maf family. YhdE subfamily. The cofactor is a divalent metal cation.

It localises to the cytoplasm. The catalysed reaction is dTTP + H2O = dTMP + diphosphate + H(+). The enzyme catalyses UTP + H2O = UMP + diphosphate + H(+). In terms of biological role, nucleoside triphosphate pyrophosphatase that hydrolyzes dTTP and UTP. May have a dual role in cell division arrest and in preventing the incorporation of modified nucleotides into cellular nucleic acids. This Pasteurella multocida (strain Pm70) protein is dTTP/UTP pyrophosphatase.